We begin with the raw amino-acid sequence, 274 residues long: MQQLQNIIETAFERRAEITPANADTVTREAVNQVIALLDSGALRVAEKIDGQWVTHQWLKKAVLLSFRINDNQVIEGAESRYFDKVPMKFADYDEARFQKEGFRVVPPAAVRQGAFIARNTVLMPSYVNIGAYVDEGTMVDTWATVGSCAQIGKNVHLSGGVGIGGVLEPLQANPTIIEDNCFIGARSEIVEGVIVEEGSVISMGVYIGQSTKIYDRETGEVHYGRVPAGSVVVSGNLPSKDGKYSLYCAVIVKKVDAKTRGKVGINELLRTID.

Belongs to the transferase hexapeptide repeat family.

It is found in the cytoplasm. It carries out the reaction (S)-2,3,4,5-tetrahydrodipicolinate + succinyl-CoA + H2O = (S)-2-succinylamino-6-oxoheptanedioate + CoA. Its pathway is amino-acid biosynthesis; L-lysine biosynthesis via DAP pathway; LL-2,6-diaminopimelate from (S)-tetrahydrodipicolinate (succinylase route): step 1/3. This Escherichia fergusonii (strain ATCC 35469 / DSM 13698 / CCUG 18766 / IAM 14443 / JCM 21226 / LMG 7866 / NBRC 102419 / NCTC 12128 / CDC 0568-73) protein is 2,3,4,5-tetrahydropyridine-2,6-dicarboxylate N-succinyltransferase.